Reading from the N-terminus, the 209-residue chain is Casparian strip membrane protein 1 (209 aa).

Residues 1–46 are Cytoplasmic-facing; the sequence is MSSGANATTIDVPETRAEAKGKAPLIAAPIVATTKATPHPNAGWKK. A helical transmembrane segment spans residues 47-67; it reads GLAIFDFLLRLAAIAATLAAA. The Extracellular segment spans residues 68–95; it reads TTMGTTDETLPFFTQFFQFQASFDDLPA. The helical transmembrane segment at 96 to 116 threads the bilayer; sequence FMFFVVATAIASGYLALSLPF. Residues 117 to 137 are Cytoplasmic-facing; it reads SLVSIFRPHAQGIRLLLIISD. Residues 138–158 traverse the membrane as a helical segment; sequence TVMLALTTAGAASATAIVYLA. Over 159–183 the chain is Extracellular; it reads HNGDSSANWIAICQQFTDFCQSVSG. The helical transmembrane segment at 184-204 threads the bilayer; that stretch reads AVVASFIAVVIFMLLVMMSAL. Over 205–209 the chain is Cytoplasmic; sequence ALRKH.

Belongs to the Casparian strip membrane proteins (CASP) family. As to quaternary structure, homodimer and heterodimers.

The protein resides in the cell membrane. Functionally, regulates membrane-cell wall junctions and localized cell wall deposition. Required for establishment of the Casparian strip membrane domain (CSD) and the subsequent formation of Casparian strips, a cell wall modification of the root endodermis that determines an apoplastic barrier between the intraorganismal apoplasm and the extraorganismal apoplasm and prevents lateral diffusion. The protein is Casparian strip membrane protein 1 of Vitis vinifera (Grape).